We begin with the raw amino-acid sequence, 329 residues long: 4-hydroxythreonine-4-phosphate dehydrogenase (329 aa).

Substrate-binding residues include His-136 and Thr-137. A divalent metal cation contacts are provided by His-166, His-211, and His-266. Substrate-binding residues include Lys-274, Asn-283, and Arg-292.

The protein belongs to the PdxA family. Homodimer. It depends on Zn(2+) as a cofactor. Requires Mg(2+) as cofactor. Co(2+) is required as a cofactor.

The protein localises to the cytoplasm. It carries out the reaction 4-(phosphooxy)-L-threonine + NAD(+) = 3-amino-2-oxopropyl phosphate + CO2 + NADH. Its pathway is cofactor biosynthesis; pyridoxine 5'-phosphate biosynthesis; pyridoxine 5'-phosphate from D-erythrose 4-phosphate: step 4/5. Its function is as follows. Catalyzes the NAD(P)-dependent oxidation of 4-(phosphooxy)-L-threonine (HTP) into 2-amino-3-oxo-4-(phosphooxy)butyric acid which spontaneously decarboxylates to form 3-amino-2-oxopropyl phosphate (AHAP). The protein is 4-hydroxythreonine-4-phosphate dehydrogenase of Escherichia coli O6:H1 (strain CFT073 / ATCC 700928 / UPEC).